The chain runs to 268 residues: Ribosomal RNA small subunit methyltransferase A (268 aa).

6 residues coordinate S-adenosyl-L-methionine: asparagine 18, leucine 20, glycine 45, glutamate 66, aspartate 91, and asparagine 112.

Belongs to the class I-like SAM-binding methyltransferase superfamily. rRNA adenine N(6)-methyltransferase family. RsmA subfamily.

The protein localises to the cytoplasm. It carries out the reaction adenosine(1518)/adenosine(1519) in 16S rRNA + 4 S-adenosyl-L-methionine = N(6)-dimethyladenosine(1518)/N(6)-dimethyladenosine(1519) in 16S rRNA + 4 S-adenosyl-L-homocysteine + 4 H(+). In terms of biological role, specifically dimethylates two adjacent adenosines (A1518 and A1519) in the loop of a conserved hairpin near the 3'-end of 16S rRNA in the 30S particle. May play a critical role in biogenesis of 30S subunits. This is Ribosomal RNA small subunit methyltransferase A from Vibrio vulnificus (strain CMCP6).